Reading from the N-terminus, the 100-residue chain is Secreted protein of Ly-6 domain 1 (100 aa).

The signal sequence occupies residues 1 to 22; that stretch reads MAKCLLLLLLVVLSSLLGLPQA. Positions 23–100 constitute a UPAR/Ly6 domain; that stretch reads LECFQCNRVN…CHDSPLCNKF (78 aa). 5 disulfide bridges follow: cysteine 25–cysteine 52, cysteine 28–cysteine 37, cysteine 44–cysteine 70, cysteine 74–cysteine 90, and cysteine 91–cysteine 97. Asparagine 60 is a glycosylation site (N-linked (GlcNAc...) asparagine).

In terms of processing, glycosylated. In terms of tissue distribution, expressed in placenta, where it is detected in both fetal tissues (cotyledon and intercotyledon) and maternal tissues (caruncle and intercaruncular endometrium) (at protein level). Expressed in the mesenchyme area of villi in the cotyledon (at protein level). In endometrium, expressed in the luminal epithelium and weakly in the subluminal stroma (at protein level). Detected in trophoblast mononucleate cells (TMCs) (at protein level). Also detected in trophoblast binucleate cells (BNCs). Overall, expression is strongest in fetal tissue and lower in maternal tissue. Not detected in other tissues tested.

Its subcellular location is the secreted. Binds specifically to type I collagen. The protein is Secreted protein of Ly-6 domain 1 of Bos taurus (Bovine).